Here is a 1556-residue protein sequence, read N- to C-terminus: Ferredoxin-dependent glutamate synthase 2 (1556 aa).

The For GATase activity role is filled by C37. In terms of domain architecture, Glutamine amidotransferase type-2 spans 37-431 (CGVGFIANLR…PGQMIAVDLA (395 aa)). C1173, C1179, and C1184 together coordinate [3Fe-4S] cluster. Positions 1533–1556 (PSEKDSPEANGDVSLTGEKTLTSV) are disordered.

It belongs to the glutamate synthase family. [3Fe-4S] cluster serves as cofactor. Requires FAD as cofactor. The cofactor is FMN.

It carries out the reaction 2 oxidized [2Fe-2S]-[ferredoxin] + 2 L-glutamate = L-glutamine + 2 reduced [2Fe-2S]-[ferredoxin] + 2-oxoglutarate + 2 H(+). The protein operates within amino-acid biosynthesis; L-glutamate biosynthesis via GLT pathway; L-glutamate from 2-oxoglutarate and L-glutamine (ferredoxin route): step 1/1. It functions in the pathway energy metabolism; nitrogen metabolism. This chain is Ferredoxin-dependent glutamate synthase 2 (gltS), found in Synechocystis sp. (strain ATCC 27184 / PCC 6803 / Kazusa).